Reading from the N-terminus, the 123-residue chain is Thioredoxin H-type (123 aa).

In terms of domain architecture, Thioredoxin spans 2-119; sequence AATAELIPAG…IEAKLLKHSQ (118 aa). A disulfide bridge links Cys45 with Cys48.

This sequence belongs to the thioredoxin family. Plant H-type subfamily.

It is found in the cytoplasm. Functionally, participates in various redox reactions through the reversible oxidation of the active center dithiol to a disulfide. The H form is known to activate a number of cytosolic enzymes. The chain is Thioredoxin H-type (PEC-2) from Brassica campestris (Field mustard).